The following is a 306-amino-acid chain: Ribosomal protein L11 methyltransferase (306 aa).

Positions 139, 173, 195, and 242 each coordinate S-adenosyl-L-methionine.

Belongs to the methyltransferase superfamily. PrmA family.

The protein localises to the cytoplasm. The enzyme catalyses L-lysyl-[protein] + 3 S-adenosyl-L-methionine = N(6),N(6),N(6)-trimethyl-L-lysyl-[protein] + 3 S-adenosyl-L-homocysteine + 3 H(+). Functionally, methylates ribosomal protein L11. This chain is Ribosomal protein L11 methyltransferase, found in Trichormus variabilis (strain ATCC 29413 / PCC 7937) (Anabaena variabilis).